The chain runs to 227 residues: Ribose-5-phosphate isomerase A (227 aa).

Substrate is bound by residues threonine 26–threonine 29, aspartate 82–aspartate 85, and lysine 95–glycine 98. Residue glutamate 104 is the Proton acceptor of the active site. Residue lysine 122 coordinates substrate.

It belongs to the ribose 5-phosphate isomerase family. In terms of assembly, homodimer.

The enzyme catalyses aldehydo-D-ribose 5-phosphate = D-ribulose 5-phosphate. Its pathway is carbohydrate degradation; pentose phosphate pathway; D-ribose 5-phosphate from D-ribulose 5-phosphate (non-oxidative stage): step 1/1. In terms of biological role, catalyzes the reversible conversion of ribose-5-phosphate to ribulose 5-phosphate. This chain is Ribose-5-phosphate isomerase A, found in Streptococcus equi subsp. equi (strain 4047).